A 672-amino-acid polypeptide reads, in one-letter code: tRNA 5-methylaminomethyl-2-thiouridine biosynthesis bifunctional protein MnmC (672 aa).

The tract at residues 1 to 243 is tRNA (mnm(5)s(2)U34)-methyltransferase; it reads MTSITHAELG…KREMIAGCME (243 aa). An FAD-dependent cmnm(5)s(2)U34 oxidoreductase region spans residues 269 to 672; the sequence is IGGGIASAAL…LRKGKAITEL (404 aa).

In the N-terminal section; belongs to the methyltransferase superfamily. tRNA (mnm(5)s(2)U34)-methyltransferase family. It in the C-terminal section; belongs to the DAO family. FAD serves as cofactor.

Its subcellular location is the cytoplasm. The catalysed reaction is 5-aminomethyl-2-thiouridine(34) in tRNA + S-adenosyl-L-methionine = 5-methylaminomethyl-2-thiouridine(34) in tRNA + S-adenosyl-L-homocysteine + H(+). Catalyzes the last two steps in the biosynthesis of 5-methylaminomethyl-2-thiouridine (mnm(5)s(2)U) at the wobble position (U34) in tRNA. Catalyzes the FAD-dependent demodification of cmnm(5)s(2)U34 to nm(5)s(2)U34, followed by the transfer of a methyl group from S-adenosyl-L-methionine to nm(5)s(2)U34, to form mnm(5)s(2)U34. The polypeptide is tRNA 5-methylaminomethyl-2-thiouridine biosynthesis bifunctional protein MnmC (Vibrio vulnificus (strain CMCP6)).